The primary structure comprises 430 residues: Zinc carboxypeptidase A 1 (430 aa).

Residues 1–22 (MSLNKCLLFALLAIVASASVSA) form the signal peptide. In terms of domain architecture, Peptidase M14 spans 124–423 (QYYELDDTYA…DSIVAMATEV (300 aa)). His-187 and Glu-190 together coordinate Zn(2+). A disulfide bond links Cys-252 and Cys-275. His-311 provides a ligand contact to Zn(2+). Glu-386 functions as the Proton donor/acceptor in the catalytic mechanism.

The protein belongs to the peptidase M14 family. Zn(2+) is required as a cofactor.

Its subcellular location is the secreted. This chain is Zinc carboxypeptidase A 1, found in Drosophila melanogaster (Fruit fly).